The sequence spans 469 residues: Cytochrome c biogenesis protein CcsB (469 aa).

Helical transmembrane passes span 30–50 (LRLA…GTVI), 89–109 (TPWF…CSLT), and 175–195 (IGPI…IWGS).

It belongs to the Ccs1/CcsB family. May interact with CcsA.

It is found in the cellular thylakoid membrane. In terms of biological role, required during biogenesis of c-type cytochromes (cytochrome c6 and cytochrome f) at the step of heme attachment. This Synechococcus sp. (strain JA-2-3B'a(2-13)) (Cyanobacteria bacterium Yellowstone B-Prime) protein is Cytochrome c biogenesis protein CcsB.